Reading from the N-terminus, the 239-residue chain is Ribonuclease Le2 (239 aa).

5 disulfides stabilise this stretch: Cys-5-Cys-22, Cys-13-Cys-58, Cys-21-Cys-126, Cys-66-Cys-118, and Cys-191-Cys-225. Catalysis depends on residues His-51, Glu-111, and His-115.

The protein belongs to the RNase T2 family.

The enzyme catalyses a ribonucleotidyl-ribonucleotide-RNA + H2O = a 3'-end 3'-phospho-ribonucleotide-RNA + a 5'-end dephospho-ribonucleoside-RNA + H(+). In terms of biological role, this is a base non-specific and adenylic acid preferential ribonuclease. In Lentinula edodes (Shiitake mushroom), this protein is Ribonuclease Le2.